The sequence spans 253 residues: Uridine phosphorylase (253 aa).

Belongs to the PNP/UDP phosphorylase family. In terms of assembly, homohexamer.

Its subcellular location is the cytoplasm. It catalyses the reaction uridine + phosphate = alpha-D-ribose 1-phosphate + uracil. Its pathway is pyrimidine metabolism; UMP biosynthesis via salvage pathway; uracil from uridine (phosphorylase route): step 1/1. Its function is as follows. Catalyzes the reversible phosphorylytic cleavage of uridine to uracil and ribose-1-phosphate. Shows weak activity towards deoxyuridine and thymidine. The produced molecules are then utilized as carbon and energy sources or in the rescue of pyrimidine bases for nucleotide synthesis. The chain is Uridine phosphorylase from Escherichia coli (strain K12).